We begin with the raw amino-acid sequence, 113 residues long: FK506-binding protein 1B (113 aa).

The PPIase FKBP-type domain occupies Gly19 to Gln113.

Belongs to the FKBP-type PPIase family. FKBP1 subfamily.

The protein resides in the cytoplasm. It carries out the reaction [protein]-peptidylproline (omega=180) = [protein]-peptidylproline (omega=0). Its activity is regulated as follows. Inhibited by both FK506 and rapamycin. PPIases accelerate the folding of proteins. It catalyzes the cis-trans isomerization of proline imidic peptide bonds in oligopeptides. In Neurospora crassa (strain ATCC 24698 / 74-OR23-1A / CBS 708.71 / DSM 1257 / FGSC 987), this protein is FK506-binding protein 1B (fkr-3).